Here is a 200-residue protein sequence, read N- to C-terminus: Dephospho-CoA kinase (200 aa).

A DPCK domain is found at 4-200 (VLALTGGIAT…QLLIKIKEEG (197 aa)). 12 to 17 (ATGKST) is a binding site for ATP.

This sequence belongs to the CoaE family.

Its subcellular location is the cytoplasm. The catalysed reaction is 3'-dephospho-CoA + ATP = ADP + CoA + H(+). It functions in the pathway cofactor biosynthesis; coenzyme A biosynthesis; CoA from (R)-pantothenate: step 5/5. Functionally, catalyzes the phosphorylation of the 3'-hydroxyl group of dephosphocoenzyme A to form coenzyme A. The chain is Dephospho-CoA kinase from Lactobacillus acidophilus (strain ATCC 700396 / NCK56 / N2 / NCFM).